The following is a 261-amino-acid chain: uncharacterized protein (261 aa).

This is an uncharacterized protein from Methanocaldococcus jannaschii (strain ATCC 43067 / DSM 2661 / JAL-1 / JCM 10045 / NBRC 100440) (Methanococcus jannaschii).